A 66-amino-acid polypeptide reads, in one-letter code: Large ribosomal subunit protein uL29 (66 aa).

This sequence belongs to the universal ribosomal protein uL29 family.

The polypeptide is Large ribosomal subunit protein uL29 (Rhizobium leguminosarum bv. trifolii (strain WSM2304)).